Consider the following 124-residue polypeptide: Secreted RxLR effector protein 49 (124 aa).

The first 22 residues, 1-22 (MIRRSPLVAVILFVAITHVVLA), serve as a signal peptide directing secretion. Positions 57-60 (RSLR) match the RxLR motif.

This sequence belongs to the RxLR effector family.

The protein resides in the secreted. It localises to the host cytoplasm. Its subcellular location is the host nucleus. Its function is as follows. Effector that acts as a broad suppressor of cell death to interrupt plant immunity. Inhibits cell death induced by cell death-inducing proteins, including the PAMP elicitor INF1 from P.infestans. This Plasmopara viticola (Downy mildew of grapevine) protein is Secreted RxLR effector protein 49.